We begin with the raw amino-acid sequence, 812 residues long: Mitochondrial intermediate peptidase (812 aa).

The N-terminal 29 residues, M1–S29, are a transit peptide targeting the mitochondrion. The interval P19 to D49 is disordered. The span at S37–S46 shows a compositional bias: low complexity. H595 lines the Zn(2+) pocket. The active site involves E596. The Zn(2+) site is built by H599 and H602.

This sequence belongs to the peptidase M3 family. Requires Zn(2+) as cofactor.

The protein localises to the mitochondrion matrix. The enzyme catalyses Release of an N-terminal octapeptide as second stage of processing of some proteins imported into the mitochondrion.. Functionally, cleaves proteins, imported into the mitochondrion, to their mature size. While most mitochondrial precursor proteins are processed to the mature form in one step by mitochondrial processing peptidase (MPP), the sequential cleavage by MIP of an octapeptide after initial processing by MPP is a required step for a subgroup of nuclear-encoded precursor proteins destined for the matrix or the inner membrane. This Scheffersomyces stipitis (strain ATCC 58785 / CBS 6054 / NBRC 10063 / NRRL Y-11545) (Yeast) protein is Mitochondrial intermediate peptidase (OCT1).